We begin with the raw amino-acid sequence, 178 residues long: MAMYGGQIHLIIGPMFAGKSTELIRLVKRYQIARYKCLVVNYEKDARYGNGVRTHDNTCISAVPTASLDDVESISEHVEVIGIDEGQFFPNIVSFCERMANAGKVLIVAALDGTFQRKPFTNICELIPLAENVTKLNAVCMYCYKDASFSKRLGNETEIEIIGGSDKYKSVCRKCYFF.

13–20 (GPMFAGKS) contacts ATP. Glu85 functions as the Proton acceptor in the catalytic mechanism. Phe115 lines the substrate pocket. Positions 140 and 143 each coordinate Zn(2+). 159 to 163 (IEIIG) contributes to the substrate binding site. 2 residues coordinate Zn(2+): Cys172 and Cys175.

Belongs to the thymidine kinase family.

It catalyses the reaction thymidine + ATP = dTMP + ADP + H(+). This is Thymidine kinase (TK) from Myxoma virus (strain Uriarra) (MYXV).